The chain runs to 126 residues: Hydrogenase maturation factor HypA (126 aa).

Residue His-2 coordinates Ni(2+). Residues Cys-78, Cys-81, Cys-97, and Cys-100 each coordinate Zn(2+).

The protein belongs to the HypA/HybF family.

Its function is as follows. Involved in the maturation of [NiFe] hydrogenases. Required for nickel insertion into the metal center of the hydrogenase. The protein is Hydrogenase maturation factor HypA of Methanococcus maripaludis (strain C7 / ATCC BAA-1331).